Consider the following 387-residue polypeptide: Postreplication repair E3 ubiquitin-protein ligase rad18 (387 aa).

The segment at 29-67 adopts an RING-type zinc-finger fold; it reads CLICHEYFRAPLITSCSHTFCSFCIRDYLREHPMCPACR. A disordered region spans residues 119-153; the sequence is DSASGDEEWEDDLASNSSPASIAKKTSRDSKKRKR. Residues 122–131 show a composition bias toward acidic residues; it reads SGDEEWEDDL. The segment at 156–183 adopts a UBZ4-type zinc-finger fold; it reads LVHCPACSNLVPHNQINQHLDSCLNSPS. Residues Cys-159, Cys-162, His-174, and Cys-178 each coordinate Zn(2+). Residues 174–206 are disordered; that stretch reads HLDSCLNSPSSPSSSSSPYKNKDNSKSNSLLSF. Positions 177–192 are enriched in low complexity; the sequence is SCLNSPSSPSSSSSPY. The 35-residue stretch at 240–274 folds into the SAP domain; the sequence is YALLSESKIRSKLSEMGLPTDGHKQLLQRRHAKWV. The disordered stretch occupies residues 335–387; it reads KQSTTNKNDSLRNTAVESSTEPSTSNGFPATSVSPPLTIDLTNSQTGSDGPQS.

This sequence belongs to the RAD18 family. In terms of assembly, interacts with E2 ubc2, forming a complex with ubiquitin ligase activity.

It localises to the nucleus. The enzyme catalyses S-ubiquitinyl-[E2 ubiquitin-conjugating enzyme]-L-cysteine + [acceptor protein]-L-lysine = [E2 ubiquitin-conjugating enzyme]-L-cysteine + N(6)-ubiquitinyl-[acceptor protein]-L-lysine.. It participates in protein modification; protein ubiquitination. E3 RING-finger protein, member of the UBC2/RAD6 epistasis group. Associates to the E2 ubiquitin conjugating enzyme ubc2/rad6 to form the ubc2-rad18 ubiquitin ligase complex involved in postreplicative repair (PRR) of damaged DNA. The chain is Postreplication repair E3 ubiquitin-protein ligase rad18 (rhp18) from Schizosaccharomyces pombe (strain 972 / ATCC 24843) (Fission yeast).